The chain runs to 73 residues: Translational regulator CsrA (73 aa).

This sequence belongs to the CsrA/RsmA family. In terms of assembly, homodimer; the beta-strands of each monomer intercalate to form a hydrophobic core, while the alpha-helices form wings that extend away from the core.

The protein resides in the cytoplasm. Its function is as follows. A translational regulator that binds mRNA to regulate translation initiation and/or mRNA stability. Usually binds in the 5'-UTR at or near the Shine-Dalgarno sequence preventing ribosome-binding, thus repressing translation. Its main target seems to be the major flagellin gene, while its function is anatagonized by FliW. This is Translational regulator CsrA from Thermosipho africanus (strain TCF52B).